A 287-amino-acid chain; its full sequence is Prepilin leader peptidase/N-methyltransferase (287 aa).

The next 6 membrane-spanning stretches (helical) occupy residues 10 to 30, 101 to 121, 125 to 145, 177 to 197, 226 to 246, and 253 to 273; these read LGFP…NVVI, ISIQ…ASVW, FGWQ…MSGI, KPAL…WWLF, ILPI…IWLF, and ATPI…FFWG.

The protein belongs to the peptidase A24 family.

It localises to the cell inner membrane. It carries out the reaction Typically cleaves a -Gly-|-Phe- bond to release an N-terminal, basic peptide of 5-8 residues from type IV prepilin, and then N-methylates the new N-terminal amino group, the methyl donor being S-adenosyl-L-methionine.. In terms of biological role, plays an essential role in type IV pili and type II pseudopili formation by proteolytically removing the leader sequence from substrate proteins and subsequently monomethylating the alpha-amino group of the newly exposed N-terminal phenylalanine. In Xanthomonas campestris pv. campestris (strain ATCC 33913 / DSM 3586 / NCPPB 528 / LMG 568 / P 25), this protein is Prepilin leader peptidase/N-methyltransferase (xpsO).